The primary structure comprises 240 residues: Transcriptional regulatory protein rxt2 (240 aa).

The protein belongs to the RXT2 family. In terms of assembly, component of the RPD3C(L) complex.

Its subcellular location is the nucleus. Component of the RPD3C(L) histone deacetylase complex (HDAC) responsible for the deacetylation of lysine residues on the N-terminal part of the core histones (H2A, H2B, H3 and H4). Histone deacetylation gives a tag for epigenetic repression and plays an important role in transcriptional regulation, cell cycle progression and developmental events. In Schizosaccharomyces pombe (strain 972 / ATCC 24843) (Fission yeast), this protein is Transcriptional regulatory protein rxt2 (rtx2).